The primary structure comprises 610 residues: MLFARRLEQLKDLNRIRNFSIIAHIDHGKSTLADRFIQICGGLTEREMSSQVLDSMDIERERGITIKAQCVSLNYTATDGKTYLLNFIDTPGHVDFSYEVSRSLAACEGAILVVDAAQGVEAQTLAVCYTAIDQSLTVLPVLNKIDLPQAEPERVISEIEDIIGLDAQDAIRVSAKSGLGVNDVLEALVANIPPPKGDVHAPLQALIIDSWFDSYLGVVSLVRIVNGSIRKGDKMRVMSTGRAYEVDQVGIFTPKRTKLDALYAGEVGYVVAGIKEIQGAPVGDTLTLDRNPADKVLPGFQRVKPQVYAGLFPVSSDDFEAFREALAKLSLNDASLFYEPESSEALGFGFRCGFLGMLHMEIIQERLEREYNLDLISTAPTVVYQIVTQKGETLLIDNPSHLPPTPQIKEMYEPIVRANILVPQDYLGPIITLCVERRGVQVSMTYSGRHVSVVYDIPMSEVVSDFFDRLKSVSRGYASLDYNFQRFQIADLVKMDILINSERVDALAVIVHRDSAHSRGKLIAEKMQQLIPRQMFDVAIQAAIGSHIIARQTVKALRKNVTAKCYGGDVTRKRKLLEKQKAGKKRMKQVGHVEIPQEAFMAVFQTDKKK.

Positions 14–196 (NRIRNFSIIA…ALVANIPPPK (183 aa)) constitute a tr-type G domain. Residues 26-31 (DHGKST) and 143-146 (NKID) contribute to the GTP site.

This sequence belongs to the TRAFAC class translation factor GTPase superfamily. Classic translation factor GTPase family. LepA subfamily.

The protein localises to the cell inner membrane. The catalysed reaction is GTP + H2O = GDP + phosphate + H(+). Required for accurate and efficient protein synthesis under certain stress conditions. May act as a fidelity factor of the translation reaction, by catalyzing a one-codon backward translocation of tRNAs on improperly translocated ribosomes. Back-translocation proceeds from a post-translocation (POST) complex to a pre-translocation (PRE) complex, thus giving elongation factor G a second chance to translocate the tRNAs correctly. Binds to ribosomes in a GTP-dependent manner. This chain is Elongation factor 4, found in Legionella pneumophila (strain Lens).